A 175-amino-acid polypeptide reads, in one-letter code: Transcription factor E (175 aa).

Positions 4 to 88 (AEDLFINLAK…YWKPNIDQIN (85 aa)) constitute an HTH TFE/IIEalpha-type domain.

The protein belongs to the TFE family. As to quaternary structure, monomer. Interaction with RNA polymerase subunits RpoF and RpoE is necessary for Tfe stimulatory transcription activity. Able to interact with Tbp and RNA polymerase in the absence of DNA promoter. Interacts both with the preinitiation and elongation complexes.

Transcription factor that plays a role in the activation of archaeal genes transcribed by RNA polymerase. Facilitates transcription initiation by enhancing TATA-box recognition by TATA-box-binding protein (Tbp), and transcription factor B (Tfb) and RNA polymerase recruitment. Not absolutely required for transcription in vitro, but particularly important in cases where Tbp or Tfb function is not optimal. It dynamically alters the nucleic acid-binding properties of RNA polymerases by stabilizing the initiation complex and destabilizing elongation complexes. Seems to translocate with the RNA polymerase following initiation and acts by binding to the non template strand of the transcription bubble in elongation complexes. This Saccharolobus islandicus (strain Y.N.15.51 / Yellowstone #2) (Sulfolobus islandicus) protein is Transcription factor E.